We begin with the raw amino-acid sequence, 630 residues long: tRNA uridine 5-carboxymethylaminomethyl modification enzyme MnmG (630 aa).

13-18 provides a ligand contact to FAD; that stretch reads GGGHAG. 273 to 287 serves as a coordination point for NAD(+); it reads GPRYCPSIEDKIHRF.

Belongs to the MnmG family. As to quaternary structure, homodimer. Heterotetramer of two MnmE and two MnmG subunits. FAD is required as a cofactor.

It localises to the cytoplasm. In terms of biological role, NAD-binding protein involved in the addition of a carboxymethylaminomethyl (cmnm) group at the wobble position (U34) of certain tRNAs, forming tRNA-cmnm(5)s(2)U34. The chain is tRNA uridine 5-carboxymethylaminomethyl modification enzyme MnmG from Pseudomonas putida (strain GB-1).